Consider the following 268-residue polypeptide: Bidirectional sugar transporter N3 (268 aa).

At 1 to 7 (MAISHNT) the chain is on the extracellular side. Residues 8–28 (LAFTFGMLGNVISFLVFLAPI) traverse the membrane as a helical segment. Residues 10–96 (FTFGMLGNVI…ILYIIYAPRD (87 aa)) form the MtN3/slv 1 domain. Residues 29–42 (STFYRIYKKKSTEG) are Cytoplasmic-facing. The helical transmembrane segment at 43-63 (FQSLPYLVALFSSMLWLYYAL) threads the bilayer. Residues 64 to 70 (LKKDAFL) lie on the Extracellular side of the membrane. A helical transmembrane segment spans residues 71–91 (LITINSFGCVVETIYIILYII). The Cytoplasmic portion of the chain corresponds to 92 to 103 (YAPRDARNLTFK). The helical transmembrane segment at 104 to 124 (LLSAMNVGSFALILIVTNYAV) threads the bilayer. Residues 125-131 (HGPLRVQ) are Extracellular-facing. Residues 131-214 (QVLGWVCVSL…QMLLYAIYRN (84 aa)) form the MtN3/slv 2 domain. A helical transmembrane segment spans residues 132–152 (VLGWVCVSLSVSVFAAPLSIV). At 153–165 (AQVVRTKSVEFMP) the chain is on the cytoplasmic side. A helical membrane pass occupies residues 166 to 186 (FNLSFTLTLSATMWFGYGFFL). Residues 187-190 (KDIC) are Extracellular-facing. Residues 191–211 (IXLPNVLGXVLGLLQMLLYAI) traverse the membrane as a helical segment. Residues 212–268 (YRNGGEKAMKKEKKAPIEPPKSIVIETQLEKIEQEKKNKDDDNEEKDKSEEPIGCGV) are Cytoplasmic-facing. A coiled-coil region spans residues 234–262 (IVIETQLEKIEQEKKNKDDDNEEKDKSEE). Residues 243–262 (IEQEKKNKDDDNEEKDKSEE) are compositionally biased toward basic and acidic residues. Residues 243-268 (IEQEKKNKDDDNEEKDKSEEPIGCGV) form a disordered region.

It belongs to the SWEET sugar transporter family. Forms homooligomers and/or heterooligomers.

The protein localises to the cell membrane. In terms of biological role, mediates both low-affinity uptake and efflux of sugar across the plasma membrane. In Medicago truncatula (Barrel medic), this protein is Bidirectional sugar transporter N3 (N3).